We begin with the raw amino-acid sequence, 1413 residues long: DNA-directed RNA polymerase subunit beta' (1413 aa).

Cys70, Cys72, Cys85, and Cys88 together coordinate Zn(2+). The Mg(2+) site is built by Asp460, Asp462, and Asp464. Residues Cys819, Cys893, Cys900, and Cys903 each contribute to the Zn(2+) site.

It belongs to the RNA polymerase beta' chain family. As to quaternary structure, the RNAP catalytic core consists of 2 alpha, 1 beta, 1 beta' and 1 omega subunit. When a sigma factor is associated with the core the holoenzyme is formed, which can initiate transcription. Requires Mg(2+) as cofactor. Zn(2+) serves as cofactor.

It carries out the reaction RNA(n) + a ribonucleoside 5'-triphosphate = RNA(n+1) + diphosphate. Its function is as follows. DNA-dependent RNA polymerase catalyzes the transcription of DNA into RNA using the four ribonucleoside triphosphates as substrates. The sequence is that of DNA-directed RNA polymerase subunit beta' from Burkholderia multivorans (strain ATCC 17616 / 249).